The sequence spans 162 residues: Endoribonuclease YbeY (162 aa).

3 residues coordinate Zn(2+): histidine 117, histidine 121, and histidine 127.

The protein belongs to the endoribonuclease YbeY family. Requires Zn(2+) as cofactor.

The protein resides in the cytoplasm. Single strand-specific metallo-endoribonuclease involved in late-stage 70S ribosome quality control and in maturation of the 3' terminus of the 16S rRNA. This is Endoribonuclease YbeY from Francisella tularensis subsp. holarctica (strain OSU18).